The sequence spans 122 residues: Small ribosomal subunit protein uS13 (122 aa).

The segment at 97–122 (PVRGQRTRTNARTRKGPRKTVAKKKK) is disordered. Residues 101–122 (QRTRTNARTRKGPRKTVAKKKK) show a composition bias toward basic residues.

Belongs to the universal ribosomal protein uS13 family. Part of the 30S ribosomal subunit. Forms a loose heterodimer with protein S19. Forms two bridges to the 50S subunit in the 70S ribosome.

Located at the top of the head of the 30S subunit, it contacts several helices of the 16S rRNA. In the 70S ribosome it contacts the 23S rRNA (bridge B1a) and protein L5 of the 50S subunit (bridge B1b), connecting the 2 subunits; these bridges are implicated in subunit movement. Contacts the tRNAs in the A and P-sites. The sequence is that of Small ribosomal subunit protein uS13 from Caldanaerobacter subterraneus subsp. tengcongensis (strain DSM 15242 / JCM 11007 / NBRC 100824 / MB4) (Thermoanaerobacter tengcongensis).